The sequence spans 328 residues: Nickel import system permease protein NikB (328 aa).

6 helical membrane-spanning segments follow: residues 11–31 (LMQM…LMKL), 104–124 (LLIS…LGII), 139–159 (VIST…LLFI), 170–190 (ILSQ…AYII), 229–249 (ILPI…GTVV), and 279–299 (VLFI…LTLL). The ABC transmembrane type-1 domain occupies 100 to 297 (APITLLISFS…IINTIADLLT (198 aa)).

This sequence belongs to the binding-protein-dependent transport system permease family. OppBC subfamily. The complex is composed of two ATP-binding proteins (NikD and NikE), two transmembrane proteins (NikB and NikC) and a solute-binding protein (NikA).

Its subcellular location is the cell membrane. Its function is as follows. Part of the ABC transporter complex NikABCDE (Opp2) involved in nickel import. Probably responsible for the translocation of the substrate across the membrane. The chain is Nickel import system permease protein NikB from Staphylococcus aureus (strain bovine RF122 / ET3-1).